The primary structure comprises 374 residues: GDSL esterase/lipase At1g71250 (374 aa).

Residues 1 to 28 (MNTNRKKMKVHIGGYVLILALTVSVILQ) form the signal peptide. Catalysis depends on Ser48, which acts as the Nucleophile. Asn162 carries an N-linked (GlcNAc...) asparagine glycan. Residues Asp338 and His341 contribute to the active site.

It belongs to the 'GDSL' lipolytic enzyme family.

The protein resides in the secreted. The protein is GDSL esterase/lipase At1g71250 of Arabidopsis thaliana (Mouse-ear cress).